A 600-amino-acid polypeptide reads, in one-letter code: DNA polymerase alpha subunit B (600 aa).

The tract at residues 107-165 (ETLLSSYTTPSKGPLKRVSSTPETPLTKRSVAARSPRQLLSPSSFSPSATPSQKYTSRT) is disordered. Phosphoserine is present on Ser126. Phosphothreonine is present on residues Thr127 and Thr130. Residues 139-159 (ARSPRQLLSPSSFSPSATPSQ) show a composition bias toward low complexity. Residues Ser141, Ser147, Ser152, and Ser154 each carry the phosphoserine modification.

Belongs to the DNA polymerase alpha subunit B family. In terms of assembly, component of the alpha DNA polymerase complex (also known as the alpha DNA polymerase-primase complex) consisting of four subunits: the catalytic subunit POLA1, the regulatory subunit POLA2, and the primase complex subunits PRIM1 and PRIM2 respectively. Within the complex, POLA1 directly interacts with PRIM2. In terms of processing, phosphorylated in a cell cycle-dependent manner, in G2/M phase.

It localises to the nucleus. In terms of biological role, accessory subunit of the DNA polymerase alpha complex (also known as the alpha DNA polymerase-primase complex) which plays an essential role in the initiation of DNA synthesis. During the S phase of the cell cycle, the DNA polymerase alpha complex (composed of a catalytic subunit POLA1, an accessory subunit POLA2 and two primase subunits, the catalytic subunit PRIM1 and the regulatory subunit PRIM2) is recruited to DNA at the replicative forks via direct interactions with MCM10 and WDHD1. The primase subunit of the polymerase alpha complex initiates DNA synthesis by oligomerising short RNA primers on both leading and lagging strands. These primers are initially extended by the polymerase alpha catalytic subunit and subsequently transferred to polymerase delta and polymerase epsilon for processive synthesis on the lagging and leading strand, respectively. This Mus musculus (Mouse) protein is DNA polymerase alpha subunit B (Pola2).